The chain runs to 410 residues: Lissencephaly-1 homolog (410 aa).

Residues 7-39 (QRDELNRAIADYLRSNGYEEAYSTFKKEAELDN) enclose the LisH domain. A coiled-coil region spans residues 32-82 (KKEAELDNNEELDKKYAGLLEKKWTSVIRLQKKVMELESKLNEAKEEITLG). 7 WD repeats span residues 106 to 147 (GHRS…RTLK), 148 to 189 (GHTD…RTMH), 190 to 229 (GHDHNVSSVAIMPNGDHIISASRDKTMKMWEVATGYCVKT), 232 to 271 (GHREWVRMVRPNQDGTLIASCSNDQTVRVWVVASKECKAE), 274 to 333 (EHEH…CLMT), 336 to 375 (GHDNWVRGVLFHPGGKFIVTCADDKTLRIWDYKNKRCMKT), and 378 to 410 (AHEHFVTSLDFHKAAPYVVTGSVDQTVKVWECR).

Belongs to the WD repeat LIS1/nudF family. Can self-associate. Component of the cytosolic PAF-AH (I) heterotetrameric enzyme, which is composed of PAFAH1B1 (beta), PAFAH1B2 (alpha2) and PAFAH1B3 (alpha1) subunits. The catalytic activity of the enzyme resides in the alpha1 (PAFAH1B3) and alpha2 (PAFAH1B2) subunits, whereas the beta subunit (PAFAH1B1) has regulatory activity. Trimer formation is not essential for the catalytic activity. Interacts with dynein, dynactin, nde1 and ndel1.

It is found in the cytoplasm. Its subcellular location is the cytoskeleton. The protein localises to the microtubule organizing center. The protein resides in the centrosome. Regulatory subunit (beta subunit) of the cytosolic type I platelet-activating factor (PAF) acetylhydrolase (PAF-AH (I)), an enzyme that catalyzes the hydrolyze of the acetyl group at the sn-2 position of PAF and its analogs and participates in the PAF inactivation. Positively regulates the activity of the minus-end directed microtubule motor protein dynein. May enhance dynein-mediated microtubule sliding by targeting dynein to the microtubule plus end. Required for several dynein- and microtubule-dependent processes such as the maintenance of Golgi integrity, the peripheral transport of microtubule fragments and the coupling of the nucleus and centrosome. May be required for proliferation of neuronal precursors and neuronal migration. The protein is Lissencephaly-1 homolog (pafah1b1) of Tetraodon nigroviridis (Spotted green pufferfish).